The sequence spans 540 residues: Putative BTB/POZ domain-containing protein R224 (540 aa).

A BTB domain is found at 16–88 (TDLELTLIDE…FYKNPIKYKN (73 aa)). A helical transmembrane segment spans residues 356–376 (IFVSLLNDIIFVLSSINMYFI).

It belongs to the mimivirus BTB/WD family.

It localises to the membrane. This chain is Putative BTB/POZ domain-containing protein R224, found in Acanthamoeba polyphaga (Amoeba).